The following is a 1409-amino-acid chain: CRISPR-associated endonuclease Cas9 (1409 aa).

The active-site For RuvC-like nuclease domain is D31. 3 residues coordinate Mg(2+): D31, E784, and E788. Residues 792–949 enclose the HNH Cas9-type domain; that stretch reads TNQGKSNSQQ…DKAGFIQRQL (158 aa). H868 serves as the catalytic Proton acceptor for HNH nuclease domain. H1011 serves as a coordination point for Mg(2+). A compositionally biased stretch (basic and acidic residues) spans 1121–1130; the sequence is EQNHGLDRGK. The segment at 1121-1151 is disordered; sequence EQNHGLDRGKPKGLFNANLSSKPKPNSNENL. The segment covering 1137-1150 has biased composition (polar residues); it reads ANLSSKPKPNSNEN.

Belongs to the CRISPR-associated protein Cas9 family. Subtype II-A subfamily. Monomer. Binds crRNA and tracrRNA. It depends on Mg(2+) as a cofactor.

Its activity is regulated as follows. Only has nuclease activity when bound to both gRNAs (crRNA plus tracrRNA). Its function is as follows. CRISPR (clustered regularly interspaced short palindromic repeat) is an adaptive immune system that provides protection against mobile genetic elements (viruses, transposable elements and conjugative plasmids). CRISPR clusters contain spacers, sequences complementary to antecedent mobile elements, and target invading nucleic acids. CRISPR clusters are transcribed and processed into CRISPR RNA (crRNA). In type II CRISPR systems correct processing of pre-crRNA requires a trans-encoded small RNA (tracrRNA), endogenous ribonuclease 3 (rnc) and Cas9. The tracrRNA serves as a guide for ribonuclease 3-aided processing of pre-crRNA. Cas9/crRNA/tracrRNA endonucleolytically cleaves linear or circular dsDNA target complementary to the spacer yielding blunt ends; Cas9 is inactive in the absence of the 2 guide RNAs (gRNA). Cas9 recognizes a 3'-G-rich protospacer adjacent motif (PAM, TGGTG in this organism) in the CRISPR repeat sequences to help distinguish self versus nonself, as targets within the bacterial CRISPR locus do not have PAMs. PAM recognition is also required for catalytic activity. When the CRISPR3/cas system consisting of cas9-cas1-cas2-csn2-CRISPR3 or just cas9-CRISPR3 is expressed in E.coli it prevents plasmids homologous to spacers 1 or 2 from transforming. The polypeptide is CRISPR-associated endonuclease Cas9 (Streptococcus thermophilus).